A 224-amino-acid polypeptide reads, in one-letter code: Small ribosomal subunit protein uS5 (224 aa).

The disordered stretch occupies residues 1–38 (MAEQSAGGQGAPEGRDSRDSREGRGRRDGGRGGRDSDK). Basic and acidic residues predominate over residues 13-38 (EGRDSRDSREGRGRRDGGRGGRDSDK). The S5 DRBM domain maps to 41–104 (YLERVVAINR…EEARKGFFRV (64 aa)).

This sequence belongs to the universal ribosomal protein uS5 family. As to quaternary structure, part of the 30S ribosomal subunit. Contacts proteins S4 and S8.

In terms of biological role, with S4 and S12 plays an important role in translational accuracy. Its function is as follows. Located at the back of the 30S subunit body where it stabilizes the conformation of the head with respect to the body. This is Small ribosomal subunit protein uS5 from Mycobacterium ulcerans (strain Agy99).